The chain runs to 173 residues: Chromophore lyase CpcS/CpeS 3 (173 aa).

This sequence belongs to the CpcS/CpeS biliprotein lyase family.

Covalently attaches a chromophore to Cys residue(s) of phycobiliproteins. The protein is Chromophore lyase CpcS/CpeS 3 of Trichodesmium erythraeum (strain IMS101).